The chain runs to 212 residues: Ras-related protein RABC1 (212 aa).

Gly2 carries the N-acetylglycine modification. 20–27 (GDSGVGKS) serves as a coordination point for GTP. Positions 41–49 (LSPTIGVDF) match the Effector region motif. Residues 67-71 (DTAGQ), 127-130 (NKVD), and 157-158 (SA) contribute to the GTP site. The disordered stretch occupies residues 182–212 (TAEGSSGGKKNIFKQNPAQTTSTSSSYCCSS). Over residues 201–212 (TTSTSSSYCCSS) the composition is skewed to low complexity. S-geranylgeranyl cysteine attachment occurs at residues Cys209 and Cys210.

This sequence belongs to the small GTPase superfamily. Rab family.

It localises to the cell membrane. Its function is as follows. Intracellular vesicle trafficking and protein transport. This is Ras-related protein RABC1 (RABC1) from Arabidopsis thaliana (Mouse-ear cress).